Reading from the N-terminus, the 340-residue chain is Ketol-acid reductoisomerase (NADP(+)) (340 aa).

In terms of domain architecture, KARI N-terminal Rossmann spans 3–182 (VQMEYEKDVK…GAARVGLLET (180 aa)). Residues 26 to 29 (YGSQ), R49, S53, and 83 to 86 (DEIQ) each bind NADP(+). Residue H108 is part of the active site. G134 contacts NADP(+). A KARI C-terminal knotted domain is found at 183-328 (TYKEETEEDL…AELRKAMPFV (146 aa)). 4 residues coordinate Mg(2+): D191, E195, E227, and E231. Position 252 (S252) interacts with substrate.

It belongs to the ketol-acid reductoisomerase family. Requires Mg(2+) as cofactor.

The enzyme catalyses (2R)-2,3-dihydroxy-3-methylbutanoate + NADP(+) = (2S)-2-acetolactate + NADPH + H(+). It catalyses the reaction (2R,3R)-2,3-dihydroxy-3-methylpentanoate + NADP(+) = (S)-2-ethyl-2-hydroxy-3-oxobutanoate + NADPH + H(+). It participates in amino-acid biosynthesis; L-isoleucine biosynthesis; L-isoleucine from 2-oxobutanoate: step 2/4. The protein operates within amino-acid biosynthesis; L-valine biosynthesis; L-valine from pyruvate: step 2/4. In terms of biological role, involved in the biosynthesis of branched-chain amino acids (BCAA). Catalyzes an alkyl-migration followed by a ketol-acid reduction of (S)-2-acetolactate (S2AL) to yield (R)-2,3-dihydroxy-isovalerate. In the isomerase reaction, S2AL is rearranged via a Mg-dependent methyl migration to produce 3-hydroxy-3-methyl-2-ketobutyrate (HMKB). In the reductase reaction, this 2-ketoacid undergoes a metal-dependent reduction by NADPH to yield (R)-2,3-dihydroxy-isovalerate. This is Ketol-acid reductoisomerase (NADP(+)) from Streptococcus gordonii (strain Challis / ATCC 35105 / BCRC 15272 / CH1 / DL1 / V288).